Here is a 72-residue protein sequence, read N- to C-terminus: MAKEDAIELQGTVLDTLPNTMFRVELENGHVVTAHISGKMRKNYIRILTGDKVTVEMTPYDLSKGRIVFRAR.

The S1-like domain maps to 1-72 (MAKEDAIELQ…SKGRIVFRAR (72 aa)).

This sequence belongs to the IF-1 family. Component of the 30S ribosomal translation pre-initiation complex which assembles on the 30S ribosome in the order IF-2 and IF-3, IF-1 and N-formylmethionyl-tRNA(fMet); mRNA recruitment can occur at any time during PIC assembly.

The protein resides in the cytoplasm. In terms of biological role, one of the essential components for the initiation of protein synthesis. Stabilizes the binding of IF-2 and IF-3 on the 30S subunit to which N-formylmethionyl-tRNA(fMet) subsequently binds. Helps modulate mRNA selection, yielding the 30S pre-initiation complex (PIC). Upon addition of the 50S ribosomal subunit IF-1, IF-2 and IF-3 are released leaving the mature 70S translation initiation complex. This chain is Translation initiation factor IF-1, found in Aliivibrio fischeri (strain ATCC 700601 / ES114) (Vibrio fischeri).